Reading from the N-terminus, the 437-residue chain is Dolichyl-diphosphooligosaccharide--protein glycosyltransferase subunit wbp1 (437 aa).

Positions M1–A19 are cleaved as a signal peptide. At A20–P401 the chain is on the lumenal side. Residues N275 and N289 are each glycosylated (N-linked (GlcNAc...) asparagine). The chain crosses the membrane as a helical span at residues Y402–L422. Topologically, residues Q423–N437 are cytoplasmic.

It belongs to the DDOST 48 kDa subunit family. As to quaternary structure, component of the oligosaccharyltransferase (OST) complex.

It localises to the endoplasmic reticulum. Its subcellular location is the membrane. The protein operates within protein modification; protein glycosylation. Subunit of the oligosaccharyl transferase (OST) complex that catalyzes the initial transfer of a defined glycan (Glc(3)Man(9)GlcNAc(2) in eukaryotes) from the lipid carrier dolichol-pyrophosphate to an asparagine residue within an Asn-X-Ser/Thr consensus motif in nascent polypeptide chains, the first step in protein N-glycosylation. N-glycosylation occurs cotranslationally and the complex associates with the Sec61 complex at the channel-forming translocon complex that mediates protein translocation across the endoplasmic reticulum (ER). All subunits are required for a maximal enzyme activity. In Schizosaccharomyces pombe (strain 972 / ATCC 24843) (Fission yeast), this protein is Dolichyl-diphosphooligosaccharide--protein glycosyltransferase subunit wbp1 (wbp1).